Reading from the N-terminus, the 147-residue chain is Helix-loop-helix protein 13 (147 aa).

Residues 41–93 (EERQTASIRERKRMCSINVAFIELRNYIPTFPYEKRLSKIDTLNLAIAYINML) enclose the bHLH domain.

As to expression, expressed in hermaphrodite dopaminergic neurons (ADE, CEP, and PDE).

It is found in the nucleus. It localises to the cytoplasm. Its function is as follows. Transcriptional activator. Shown to have a role in the negative regulation of exit from L1 arrest and dauer diapause dependent on IIS signaling (insulin and insulin-like growth factor (IGF) signaling). Hypodermal expression is regulated by IIS/daf-16 while neuronal expression is not under the control of IIS/daf-16. This chain is Helix-loop-helix protein 13, found in Caenorhabditis elegans.